Consider the following 266-residue polypeptide: MRKKITIPEILLMKQEGRKVTVLTAYDYPTARLVDAGGVDAILVGDSAGVVFSGHENTLPVTMDEMLYHVKAVVRARPKALVVADMPFMACQSGEIEALKNCGRMLQEGGAEAVKIEGGSNMAPIIRAVTEMDIPVMGHVGLTPQSVHRMGGYKVQGRKDQAERILEDAHAVQEAGAFAVVLEGIPAKLAARITEMLEIPTIGIGAGPACDGQVLVIHDILGLCEKYSPKFVKRYADLAPLITEAARQYVSEVKDGTFPTEEHSFS.

Mg(2+)-binding residues include Asp-46 and Asp-85. 3-methyl-2-oxobutanoate is bound by residues 46–47, Asp-85, and Lys-115; that span reads DS. Residue Glu-117 participates in Mg(2+) binding. Glu-183 serves as the catalytic Proton acceptor.

The protein belongs to the PanB family. In terms of assembly, homodecamer; pentamer of dimers. Mg(2+) serves as cofactor.

The protein resides in the cytoplasm. It carries out the reaction 3-methyl-2-oxobutanoate + (6R)-5,10-methylene-5,6,7,8-tetrahydrofolate + H2O = 2-dehydropantoate + (6S)-5,6,7,8-tetrahydrofolate. Its pathway is cofactor biosynthesis; (R)-pantothenate biosynthesis; (R)-pantoate from 3-methyl-2-oxobutanoate: step 1/2. In terms of biological role, catalyzes the reversible reaction in which hydroxymethyl group from 5,10-methylenetetrahydrofolate is transferred onto alpha-ketoisovalerate to form ketopantoate. This Trichlorobacter lovleyi (strain ATCC BAA-1151 / DSM 17278 / SZ) (Geobacter lovleyi) protein is 3-methyl-2-oxobutanoate hydroxymethyltransferase.